The sequence spans 147 residues: 3-dehydroquinate dehydratase (147 aa).

Tyrosine 23 (proton acceptor) is an active-site residue. Residues asparagine 75, histidine 81, and aspartate 88 each contribute to the substrate site. Histidine 101 functions as the Proton donor in the catalytic mechanism. Substrate is bound by residues leucine 102–serine 103 and arginine 112.

This sequence belongs to the type-II 3-dehydroquinase family. Homododecamer.

The enzyme catalyses 3-dehydroquinate = 3-dehydroshikimate + H2O. The protein operates within metabolic intermediate biosynthesis; chorismate biosynthesis; chorismate from D-erythrose 4-phosphate and phosphoenolpyruvate: step 3/7. Functionally, catalyzes a trans-dehydration via an enolate intermediate. This chain is 3-dehydroquinate dehydratase, found in Hahella chejuensis (strain KCTC 2396).